Reading from the N-terminus, the 109-residue chain is ATP-dependent Clp protease adapter protein ClpS (109 aa).

Residues 1–21 are disordered; it reads MAERKQGGQNNGAGSSVITEV.

It belongs to the ClpS family. Binds to the N-terminal domain of the chaperone ClpA.

Involved in the modulation of the specificity of the ClpAP-mediated ATP-dependent protein degradation. The sequence is that of ATP-dependent Clp protease adapter protein ClpS from Caulobacter sp. (strain K31).